A 193-amino-acid chain; its full sequence is Shikimate kinase (193 aa).

31–36 (GVGKTT) is an ATP binding site. Thr35 lines the Mg(2+) pocket. Substrate is bound by residues Asp53, Arg77, and Gly103. Residue Arg141 coordinates ATP. Substrate is bound at residue Arg160. Gln176 is an ATP binding site.

The protein belongs to the shikimate kinase family. Monomer. Mg(2+) is required as a cofactor.

The protein localises to the cytoplasm. The enzyme catalyses shikimate + ATP = 3-phosphoshikimate + ADP + H(+). The protein operates within metabolic intermediate biosynthesis; chorismate biosynthesis; chorismate from D-erythrose 4-phosphate and phosphoenolpyruvate: step 5/7. Functionally, catalyzes the specific phosphorylation of the 3-hydroxyl group of shikimic acid using ATP as a cosubstrate. In Novosphingobium aromaticivorans (strain ATCC 700278 / DSM 12444 / CCUG 56034 / CIP 105152 / NBRC 16084 / F199), this protein is Shikimate kinase.